Consider the following 104-residue polypeptide: Translation initiation factor 1A (104 aa).

The span at 1–14 shows a compositional bias: low complexity; the sequence is MRGQQTPPQQPTRV. Positions 1–20 are disordered; sequence MRGQQTPPQQPTRVRTPREN. One can recognise an S1-like domain in the interval 12–87; that stretch reads TRVRTPRENE…EKCDVIWRYT (76 aa).

It belongs to the eIF-1A family.

Its function is as follows. Seems to be required for maximal rate of protein biosynthesis. Enhances ribosome dissociation into subunits and stabilizes the binding of the initiator Met-tRNA(I) to 40 S ribosomal subunits. In Methanococcus maripaludis (strain DSM 14266 / JCM 13030 / NBRC 101832 / S2 / LL), this protein is Translation initiation factor 1A.